A 575-amino-acid chain; its full sequence is Transcription factor coe2 (575 aa).

The interval 63–66 (RKSN) is interaction with DNA. The C5-type zinc-finger motif lies at 151–170 (CRVLLTHEVMCSRCCEKKSC). Interaction with DNA regions lie at residues 197–204 (NCLKTAGN) and 236–239 (NNSK). Residues 254–336 (PCIKAISPSE…CKGAPGRFIY (83 aa)) enclose the IPT/TIG domain. The disordered stretch occupies residues 450 to 487 (IRNTSSISPRGYSSSSTPQQSNYSTPSNSMNGYSNVPM). Residues 454–476 (SSISPRGYSSSSTPQQSNYSTPS) show a composition bias toward low complexity. A compositionally biased stretch (polar residues) spans 477 to 487 (NSMNGYSNVPM).

It belongs to the COE family.

The protein localises to the nucleus. May play a pivotal role in the transcriptional cascade that specifies primary neurons in embryos. Stabilizes the higher neural potential of selected progenitor cells that express neurog2/X-ngnr-1 by maintaining Delta-Notch signaling. Thus ensures the transition between neural competence and irreversible commitment to a neural fate. Also promotes neuronal differentiation by activating neurod1 expression, directly or indirectly. The protein is Transcription factor coe2 of Xenopus tropicalis (Western clawed frog).